The following is a 76-amino-acid chain: Putative UPF0377 protein YGL260W (76 aa).

It belongs to the UPF0377 family.

The chain is Putative UPF0377 protein YGL260W from Saccharomyces cerevisiae (strain ATCC 204508 / S288c) (Baker's yeast).